The primary structure comprises 453 residues: Alpha-galacturonidase (453 aa).

11 to 72 (IKIAYIGGGS…SQWEYKSVDS (62 aa)) is a binding site for NAD(+). Substrate is bound at residue Asn151. Cys173 is a Mn(2+) binding site. His174 (proton donor) is an active-site residue. His209 is a binding site for Mn(2+).

Belongs to the glycosyl hydrolase 4 family. As to quaternary structure, homotetramer. The cofactor is NAD(+). Mn(2+) serves as cofactor.

It catalyses the reaction [(1-&gt;4)-alpha-D-galacturonosyl](n) + H2O = alpha-D-galacturonate + [(1-&gt;4)-alpha-D-galacturonosyl](n-1). Alpha-galacturonidase able to catalyze the hydrolysis of the chromogenic substrate p-nitrophenyl-alpha-D-galacturonic acid (pNPalphaGalUA). It is probable that alpha-1,4-di-galacturonate (GalUA(2)) is the naturally occurring substrate. The chain is Alpha-galacturonidase from Thermoanaerobacter italicus (strain DSM 9252 / Ab9).